Reading from the N-terminus, the 575-residue chain is MAPTKATTRAAITSGHHQLQQAVNPILGALGAATRKGLTRRAAATGNIDPNVENMQTRAKRKADHSPIKNDKIKRSALGNLTNNVKIMTLHPAQDEEQSGVGKKPTAQQLQALMDAKKQENLSVNVFGASKMTTRASSKVEDSVENCHKVLDKLEEALARPKPRPKAVPAAKKTVLGEVQLPAMPNPMQIPVLLPPTHNLAAPQVAAVKPVRRISNDFNKTEDSLYMSALEDVSSCDSMRLSGNFEAARRRSAKLQQKTEQQPQPLLLTLPETAPSQVVPIPPVPEEVEDFDRKNWDDPFQVSHYAMDIFNYLKVREAEFPIADYMPRQIHLTTWMRTLLVDWMVEVQETFELNHETLYLAVKIVDLYLCREVINKEKLQLLGAAAFFIACKYDERQPPLIEDFLYICDGAYNHDELVRMERETLRVIKYDLGIPLSYRFLRRYARCAKVPMPTLTLARYILELSLMDYANISFSDSQMASAALFMALRMHGGPGQLDKQTWTSTLIYYTGYQLADFAEIVTALNAGLHRKPRATIKTIRNKYSHKIFHEVAKVPLLTNQELFQGNLDLNESNLS.

The D-box motif lies at 75–83 (RSALGNLTN). At Ser-215 the chain carries Phosphoserine.

It belongs to the cyclin family. Cyclin AB subfamily. As to quaternary structure, interacts with Cdk1 kinase. Ubiquitinated. Ubiquitination leads to its degradation in early anaphase. As to expression, in embryo, it is expressed in all mitotically proliferating cells, with a high level in neuroblasts. Not expressed in old embryos and thereafter. Not expressed in endoreplicating tissues.

The protein resides in the nucleus. Functionally, cyclins are positive regulatory subunits of the cyclin-dependent kinases (CDKs), and thereby play an essential role in the control of the cell cycle, notably via their destruction during cell division. Probably functions redundantly with other cyclins in regulation of cell cycle. Its presence may be required to delay a deadline for completing cytokinesis that is ordinary imposed by nuclear envelope reformation. Degradation of CycB and CycB3 promote cytokinesis furrow initiation and ingression. Required with CycB for female fertility. The polypeptide is G2/mitotic-specific cyclin-B3 (CycB3) (Drosophila melanogaster (Fruit fly)).